We begin with the raw amino-acid sequence, 177 residues long: ATP synthase subunit b (177 aa).

A helical transmembrane segment spans residues 29-49; that stretch reads FFFVLAIFLIVLAVIGTFVVP.

This sequence belongs to the ATPase B chain family. F-type ATPases have 2 components, F(1) - the catalytic core - and F(0) - the membrane proton channel. F(1) has five subunits: alpha(3), beta(3), gamma(1), delta(1), epsilon(1). F(0) has three main subunits: a(1), b(2) and c(10-14). The alpha and beta chains form an alternating ring which encloses part of the gamma chain. F(1) is attached to F(0) by a central stalk formed by the gamma and epsilon chains, while a peripheral stalk is formed by the delta and b chains.

The protein localises to the cell membrane. In terms of biological role, f(1)F(0) ATP synthase produces ATP from ADP in the presence of a proton or sodium gradient. F-type ATPases consist of two structural domains, F(1) containing the extramembraneous catalytic core and F(0) containing the membrane proton channel, linked together by a central stalk and a peripheral stalk. During catalysis, ATP synthesis in the catalytic domain of F(1) is coupled via a rotary mechanism of the central stalk subunits to proton translocation. Its function is as follows. Component of the F(0) channel, it forms part of the peripheral stalk, linking F(1) to F(0). This Mycolicibacterium paratuberculosis (strain ATCC BAA-968 / K-10) (Mycobacterium paratuberculosis) protein is ATP synthase subunit b.